The chain runs to 46 residues: Mu-segestritoxin-Sf1f (46 aa).

4 cysteine pairs are disulfide-bonded: Cys3/Cys19, Cys10/Cys22, Cys18/Cys42, and Cys24/Cys40. The tract at residues 31–33 (RPW) is keys region for toxin activity.

This sequence belongs to the neurotoxin 16 (SFI) family. In terms of tissue distribution, expressed by the venom gland.

It localises to the secreted. Functionally, insecticidal toxin. It inhibits insect voltage-gated sodium channels (Nav) by partially blocking the channel pore in DUM neurons from the American cockroach, not by acting as a gating modifier. The inhibition is only partially reversible after prolonged washout. In vivo, the toxin causes flaccid paralysis followed by death when injected into Heliothis virescens larvae. It also causes uncoordinated movements followed by full paralysis to sheep blowflies (Lucilia cuprina). When the toxin is fused to snowdrop lectin, it is orally active against larvae of the tomato moth (Laconobia oleracea), the rice brown planthopper (Nilaparvata lugens), and the peach-potato aphid (Myzus persicae). In Segestria florentina (Tube-web spider), this protein is Mu-segestritoxin-Sf1f.